Here is a 411-residue protein sequence, read N- to C-terminus: Dual-specificity RNA methyltransferase RlmN (411 aa).

The active-site Proton acceptor is glutamate 125. Residues 131-380 (EEGRGTLCIS…IRTPRGRDIL (250 aa)) form the Radical SAM core domain. Residues cysteine 138 and cysteine 383 are joined by a disulfide bond. Positions 145, 149, and 152 each coordinate [4Fe-4S] cluster. Residues 209-210 (GE), serine 241, 263-265 (SLH), and asparagine 340 each bind S-adenosyl-L-methionine. The S-methylcysteine intermediate role is filled by cysteine 383.

This sequence belongs to the radical SAM superfamily. RlmN family. The cofactor is [4Fe-4S] cluster.

The protein resides in the cytoplasm. It carries out the reaction adenosine(2503) in 23S rRNA + 2 reduced [2Fe-2S]-[ferredoxin] + 2 S-adenosyl-L-methionine = 2-methyladenosine(2503) in 23S rRNA + 5'-deoxyadenosine + L-methionine + 2 oxidized [2Fe-2S]-[ferredoxin] + S-adenosyl-L-homocysteine. The enzyme catalyses adenosine(37) in tRNA + 2 reduced [2Fe-2S]-[ferredoxin] + 2 S-adenosyl-L-methionine = 2-methyladenosine(37) in tRNA + 5'-deoxyadenosine + L-methionine + 2 oxidized [2Fe-2S]-[ferredoxin] + S-adenosyl-L-homocysteine. Functionally, specifically methylates position 2 of adenine 2503 in 23S rRNA and position 2 of adenine 37 in tRNAs. m2A2503 modification seems to play a crucial role in the proofreading step occurring at the peptidyl transferase center and thus would serve to optimize ribosomal fidelity. This is Dual-specificity RNA methyltransferase RlmN from Brucella abortus (strain S19).